A 635-amino-acid polypeptide reads, in one-letter code: Probable serine/threonine-protein kinase DDB_G0270146 (635 aa).

Residues 77-329 (VISDIAIGKG…AKELLSHPWI (253 aa)) enclose the Protein kinase domain. Residues 83–91 (IGKGAFATV) and lysine 106 each bind ATP. Aspartate 199 functions as the Proton acceptor in the catalytic mechanism. A compositionally biased stretch (low complexity) spans 360-392 (SLLSNSSGGDDSVTDSDLSISNQSSRSSSFLLD). The disordered stretch occupies residues 360–405 (SLLSNSSGGDDSVTDSDLSISNQSSRSSSFLLDDGGGGGGSKNHTV). 2 coiled-coil regions span residues 417-456 (IEFN…KYRE) and 536-585 (KKAL…KDSS). The segment covering 540-582 (EAQKRREKEQEKLKEQEKLKEKKKEKDIKKEKDKKDKKDKQLK) has biased composition (basic and acidic residues). The tract at residues 540 to 635 (EAQKRREKEQ…GRSSSKIFNE (96 aa)) is disordered. Positions 583-598 (DSSSSTTTTNSTPSTP) are enriched in low complexity. Polar residues predominate over residues 626-635 (GRSSSKIFNE).

Belongs to the protein kinase superfamily. STE Ser/Thr protein kinase family. It depends on Mg(2+) as a cofactor.

It catalyses the reaction L-seryl-[protein] + ATP = O-phospho-L-seryl-[protein] + ADP + H(+). It carries out the reaction L-threonyl-[protein] + ATP = O-phospho-L-threonyl-[protein] + ADP + H(+). The sequence is that of Probable serine/threonine-protein kinase DDB_G0270146 from Dictyostelium discoideum (Social amoeba).